A 417-amino-acid polypeptide reads, in one-letter code: Gap junction alpha-3 protein (417 aa).

The stretch at 2-15 (GDWSFLGRLLENAQ) is an intramembrane region. At 16–19 (EHST) the chain is on the cytoplasmic side. The chain crosses the membrane as a helical span at residues 20 to 40 (VIGKVWLTVLFIFRILVLGAA). Topologically, residues 41 to 71 (AEEVWGDEQSDFTCNTQQPGCENVCYDRAFP) are extracellular. 3 cysteine pairs are disulfide-bonded: cysteine 54-cysteine 198, cysteine 61-cysteine 192, and cysteine 65-cysteine 187. The chain crosses the membrane as a helical span at residues 72-92 (ISHIRFWALQIIFVSTPTLIY). Residues 93–158 (LGHVLHIVRM…GALLRTYVFN (66 aa)) are Cytoplasmic-facing. Residues 110-128 (EEELLRRDNPQHGRGREPM) are compositionally biased toward basic and acidic residues. A disordered region spans residues 110 to 141 (EEELLRRDNPQHGRGREPMRTGSPRDPPLRDD). A helical membrane pass occupies residues 159–179 (IIFKTLFEVGFIAGQYFLYGF). Residues 180-207 (QLQPLYRCDRWPCPNTVDCFISRPTEKT) lie on the Extracellular side of the membrane. The chain crosses the membrane as a helical span at residues 208 to 228 (IFVIFMLAVACASLVLNMLEI). Residues 229-417 (YHLGWKKLKQ…GRARPGDLAI (189 aa)) lie on the Cytoplasmic side of the membrane. Disordered regions lie at residues 247-267 (DASE…SSGP) and 334-417 (RQVA…DLAI). Over residues 342–353 (PASKPSSAASSP) the composition is skewed to low complexity.

Belongs to the connexin family. Alpha-type (group II) subfamily. As to quaternary structure, a hemichannel or connexon is composed of a hexamer of connexins. A functional gap junction is formed by the apposition of two hemichannels. Forms heteromeric channels with GJA8.

Its subcellular location is the cell membrane. It is found in the cell junction. It localises to the gap junction. Functionally, structural component of lens fiber gap junctions. Gap junctions are dodecameric channels that connect the cytoplasm of adjoining cells. They are formed by the docking of two hexameric hemichannels, one from each cell membrane. Small molecules and ions diffuse from one cell to a neighboring cell via the central pore. The protein is Gap junction alpha-3 protein (Gja3) of Mus musculus (Mouse).